The following is a 58-amino-acid chain: PDPCCAEGTCECEEGKCKAGCKCTSCRCSPCEKCTSECECKSKEECAKNCTKPCSCCP.

The beta stretch occupies residues 1 to 29 (PDPCCAEGTCECEEGKCKAGCKCTSCRCS). Positions 4, 5, 10, 12, 17, 21, 23, 26, 28, 31, 34, 38, 40, 46, 50, 54, 56, and 57 each coordinate a divalent metal cation. Positions 30 to 58 (PCEKCTSECECKSKEECAKNCTKPCSCCP) are alpha.

Functionally, metallothioneins have a high content of cysteine residues that bind various heavy metals. Class I MTS in crustacea are involved in the sequestration of elevated levels of heavy-metal ions. This Potamon potamios protein is Metallothionein.